The primary structure comprises 550 residues: Homeobox and leucine zipper protein Homez (550 aa).

Residues 1–10 (MVRGWEPPPG) are compositionally biased toward pro residues. The interval 1–36 (MVRGWEPPPGLDCAISEGHKSEGTMPPNKEASGLSS) is disordered. The segment at residues 55–114 (WTQAAQTSELDSNEHLLKTFSYFPYPSLADIALLCLRYGLQMEKVKTWFMAQRLRCGISW) is a DNA-binding region (homeobox 1). The disordered stretch occupies residues 168–199 (GPPTLSKPTQTKGLKVEPEEPSQMPPLPQSHQ). Glycyl lysine isopeptide (Lys-Gly) (interchain with G-Cter in SUMO2) cross-links involve residues Lys-182, Lys-200, and Lys-202. Residues 223 to 265 (LQSSGLSKEQAGRGPNQSHGIGTASWNHSTTVPQPQARDKPPP) form a disordered region. Positions 237–256 (PNQSHGIGTASWNHSTTVPQ) are enriched in polar residues. Residue Ser-351 is modified to Phosphoserine. DNA-binding regions (homeobox) lie at residues 355-415 (QRQR…KHGQ) and 451-510 (TPPL…AEVV). The Nuclear localization signal motif lies at 358–363 (RKTKRK). Disordered regions lie at residues 424–465 (VPGA…DIQP) and 512–550 (CLDE…IIQD). A Phosphothreonine modification is found at Thr-451. A compositionally biased stretch (pro residues) spans 452-463 (PPLPIPPPPPDI). Over residues 513–550 (LDEEEEEEEEELPEDDEEEEEEEEEDDDDDDDDVIIQD) the composition is skewed to acidic residues.

As to quaternary structure, homodimer or heterodimer (Potential). Interacts with HOXC8. As to expression, ubiquitous. Strongly expressed in adult testis and kidney as well as fetal lung and kidney.

Its subcellular location is the nucleus. Functionally, may function as a transcriptional regulator. The protein is Homeobox and leucine zipper protein Homez (HOMEZ) of Homo sapiens (Human).